A 208-amino-acid chain; its full sequence is N-(5'-phosphoribosyl)anthranilate isomerase (208 aa).

This sequence belongs to the TrpF family.

The catalysed reaction is N-(5-phospho-beta-D-ribosyl)anthranilate = 1-(2-carboxyphenylamino)-1-deoxy-D-ribulose 5-phosphate. It functions in the pathway amino-acid biosynthesis; L-tryptophan biosynthesis; L-tryptophan from chorismate: step 3/5. This is N-(5'-phosphoribosyl)anthranilate isomerase from Nitrosospira multiformis (strain ATCC 25196 / NCIMB 11849 / C 71).